Reading from the N-terminus, the 799-residue chain is Valine--tRNA ligase (799 aa).

ATP is bound at residue Lys536.

It belongs to the class-I aminoacyl-tRNA synthetase family. ValS type 2 subfamily.

It localises to the cytoplasm. It catalyses the reaction tRNA(Val) + L-valine + ATP = L-valyl-tRNA(Val) + AMP + diphosphate. Catalyzes the attachment of valine to tRNA(Val). As ValRS can inadvertently accommodate and process structurally similar amino acids such as threonine, to avoid such errors, it has a 'posttransfer' editing activity that hydrolyzes mischarged Thr-tRNA(Val) in a tRNA-dependent manner. This chain is Valine--tRNA ligase (valS), found in Pyrobaculum aerophilum (strain ATCC 51768 / DSM 7523 / JCM 9630 / CIP 104966 / NBRC 100827 / IM2).